The following is a 199-amino-acid chain: Inner membrane protein E199L (199 aa).

A glycan (N-linked (GlcNAc...) asparagine; by host) is linked at asparagine 131. Residues isoleucine 150 to isoleucine 170 form a helical membrane-spanning segment.

The protein belongs to the asfivirus E199L family. As to quaternary structure, interacts with host PYCR2; this interaction results in autophagy activation. Post-translationally, contains intramolecular disulfide bonds.

The protein resides in the virion membrane. It is found in the host membrane. Functionally, essential for viral fusion with host endosomal membrane and core release. Not required for virus morphogenesis and egress. Induces complete autophagy through the interaction with and down-regulation of host PYCR2. This is Inner membrane protein E199L from African swine fever virus (isolate Tick/South Africa/Pretoriuskop Pr4/1996) (ASFV).